The primary structure comprises 189 residues: Large ribosomal subunit protein uL10 (189 aa).

This sequence belongs to the universal ribosomal protein uL10 family. As to quaternary structure, part of the ribosomal stalk of the 50S ribosomal subunit. The N-terminus interacts with L11 and the large rRNA to form the base of the stalk. The C-terminus forms an elongated spine to which L12 dimers bind in a sequential fashion forming a multimeric L10(L12)X complex.

Forms part of the ribosomal stalk, playing a central role in the interaction of the ribosome with GTP-bound translation factors. The polypeptide is Large ribosomal subunit protein uL10 (Rippkaea orientalis (strain PCC 8801 / RF-1) (Cyanothece sp. (strain PCC 8801))).